We begin with the raw amino-acid sequence, 158 residues long: 6,7-dimethyl-8-ribityllumazine synthase (158 aa).

Residues F22, 57-59 (AVE), and 81-83 (AVI) contribute to the 5-amino-6-(D-ribitylamino)uracil site. 86-87 (GT) is a (2S)-2-hydroxy-3-oxobutyl phosphate binding site. H89 serves as the catalytic Proton donor. A 5-amino-6-(D-ribitylamino)uracil-binding site is contributed by F114. R128 lines the (2S)-2-hydroxy-3-oxobutyl phosphate pocket.

Belongs to the DMRL synthase family. In terms of assembly, forms an icosahedral capsid composed of 60 subunits, arranged as a dodecamer of pentamers.

It catalyses the reaction (2S)-2-hydroxy-3-oxobutyl phosphate + 5-amino-6-(D-ribitylamino)uracil = 6,7-dimethyl-8-(1-D-ribityl)lumazine + phosphate + 2 H2O + H(+). It participates in cofactor biosynthesis; riboflavin biosynthesis; riboflavin from 2-hydroxy-3-oxobutyl phosphate and 5-amino-6-(D-ribitylamino)uracil: step 1/2. In terms of biological role, catalyzes the formation of 6,7-dimethyl-8-ribityllumazine by condensation of 5-amino-6-(D-ribitylamino)uracil with 3,4-dihydroxy-2-butanone 4-phosphate. This is the penultimate step in the biosynthesis of riboflavin. This Shewanella frigidimarina (strain NCIMB 400) protein is 6,7-dimethyl-8-ribityllumazine synthase.